Consider the following 447-residue polypeptide: Tubulin beta-5 chain (447 aa).

GTP-binding residues include Gln-11, Glu-69, Ser-138, Gly-142, Thr-143, Gly-144, Asn-204, and Asn-226. Glu-69 contributes to the Mg(2+) binding site.

Belongs to the tubulin family. Dimer of alpha and beta chains. A typical microtubule is a hollow water-filled tube with an outer diameter of 25 nm and an inner diameter of 15 nM. Alpha-beta heterodimers associate head-to-tail to form protofilaments running lengthwise along the microtubule wall with the beta-tubulin subunit facing the microtubule plus end conferring a structural polarity. Microtubules usually have 13 protofilaments but different protofilament numbers can be found in some organisms and specialized cells. Mg(2+) is required as a cofactor.

It is found in the cytoplasm. Its subcellular location is the cytoskeleton. Its function is as follows. Tubulin is the major constituent of microtubules, a cylinder consisting of laterally associated linear protofilaments composed of alpha- and beta-tubulin heterodimers. Microtubules grow by the addition of GTP-tubulin dimers to the microtubule end, where a stabilizing cap forms. Below the cap, tubulin dimers are in GDP-bound state, owing to GTPase activity of alpha-tubulin. In Triticum aestivum (Wheat), this protein is Tubulin beta-5 chain (TUBB5).